Consider the following 355-residue polypeptide: tRNA pseudouridine synthase D (355 aa).

Asp84 (nucleophile) is an active-site residue. Positions 160 to 306 constitute a TRUD domain; it reads GVPNYFGLQR…MAHERRILRL (147 aa).

It belongs to the pseudouridine synthase TruD family.

The catalysed reaction is uridine(13) in tRNA = pseudouridine(13) in tRNA. Functionally, responsible for synthesis of pseudouridine from uracil-13 in transfer RNAs. This is tRNA pseudouridine synthase D from Pseudomonas aeruginosa (strain UCBPP-PA14).